Here is a 392-residue protein sequence, read N- to C-terminus: Ceramide phosphoethanolamine synthase (392 aa).

Residues 1–10 lie on the Lumenal side of the membrane; the sequence is MIGPSSQISK. A helical membrane pass occupies residues 11–31; that stretch reads ILLTLLFLLIIFYVFMDVELY. Residues 32 to 140 lie on the Cytoplasmic side of the membrane; sequence LRIHNYAIER…MFDNVIGFSR (109 aa). The span at 59-82 shows a compositional bias: low complexity; that stretch reads SESGSGSIGGSSSSSSSSSSSTST. The tract at residues 59-91 is disordered; that stretch reads SESGSGSIGGSSSSSSSSSSSTSTKLPTAGDRQ. The chain crosses the membrane as a helical span at residues 141–161; sequence STFITPNMISFFHVGVACLAG. Residues 162–212 are Lumenal-facing; it reads KLVASDSLGYRRLGVLLFQIRTFLDDLDGHVARVRKHIRGERSEIGTSGYY. Residues 213-233 form a helical membrane-spanning segment; that stretch reads VDGLCDGLGCIALLLGIFFYL. Over 234–271 the chain is Cytoplasmic; it reads KNNPPRRGYSIIPMSDSKLPEPTMMIPKMKATTRKVAK. The chain crosses the membrane as a helical span at residues 272 to 288; the sequence is NVISFTGQLLLSSTAWN. Topologically, residues 289 to 319 are lumenal; it reads RYIAVYQNMLEREDVSGNQSHCQDYVFKSTW. Residues 320–340 form a helical membrane-spanning segment; it reads FFCVAWMWRIVNVHALLHCVL. Residues 341 to 356 are Cytoplasmic-facing; the sequence is LSIFCDKLWDFLRAIR. A helical transmembrane segment spans residues 357 to 377; that stretch reads YSGYIILLVAICLTEMHILEA. Residues 378-392 lie on the Lumenal side of the membrane; the sequence is QNYIFNSTACSNISL.

It belongs to the CDP-alcohol phosphatidyltransferase class-I family. Mn(2+) is required as a cofactor.

The protein resides in the membrane. Its subcellular location is the golgi apparatus membrane. It localises to the cell membrane. It carries out the reaction CDP-ethanolamine + an N-acylsphing-4-enine = an N-acylsphing-4-enine 1-phosphoethanolamine + CMP + H(+). The enzyme catalyses CDP-ethanolamine + an N-acyl-sphingoid base = an N-acyl-sphingoid 1-phosphoethanolamine + CMP + H(+). In terms of biological role, catalyzes the biosynthesis of ceramide phosphoethanolamine (CPE) through the transfer of a phosphatidyl head group from cytidine 5'-diphosphate (CDP)-ethanolamine on to the primary hydroxyl of ceramide. This is Ceramide phosphoethanolamine synthase from Drosophila melanogaster (Fruit fly).